The primary structure comprises 379 residues: Cytochrome b (379 aa).

The next 4 membrane-spanning stretches (helical) occupy residues 33–53 (FGSLLGMCLVIQILTGLFLAM), 77–98 (WLIRYLHANGASMFFICLFIHV), 113–133 (WNIGIILLLTTMATAFVGYVL), and 178–198 (FFAFHFILPFIIAAFALVHLL). Heme b is bound by residues His-83 and His-97. His-182 and His-196 together coordinate heme b. His-201 is a binding site for a ubiquinone. A run of 4 helical transmembrane segments spans residues 226–246 (IKDLLGIFLLLLILMALALFF), 288–308 (LGGVLALILSILILAAFPLLN), 320–340 (VTQTIYWIFIANLLVLTWIGG), and 347–367 (FTMIGQIASVTYFTIITILIP).

This sequence belongs to the cytochrome b family. As to quaternary structure, the cytochrome bc1 complex contains 11 subunits: 3 respiratory subunits (MT-CYB, CYC1 and UQCRFS1), 2 core proteins (UQCRC1 and UQCRC2) and 6 low-molecular weight proteins (UQCRH/QCR6, UQCRB/QCR7, UQCRQ/QCR8, UQCR10/QCR9, UQCR11/QCR10 and a cleavage product of UQCRFS1). This cytochrome bc1 complex then forms a dimer. Requires heme b as cofactor.

Its subcellular location is the mitochondrion inner membrane. Functionally, component of the ubiquinol-cytochrome c reductase complex (complex III or cytochrome b-c1 complex) that is part of the mitochondrial respiratory chain. The b-c1 complex mediates electron transfer from ubiquinol to cytochrome c. Contributes to the generation of a proton gradient across the mitochondrial membrane that is then used for ATP synthesis. The chain is Cytochrome b (MT-CYB) from Akodon philipmyersi (Myers' grass mouse).